Consider the following 151-residue polypeptide: UPF0178 protein Tcr_1995 (151 aa).

Residues R116–A135 are disordered.

This sequence belongs to the UPF0178 family.

In Hydrogenovibrio crunogenus (strain DSM 25203 / XCL-2) (Thiomicrospira crunogena), this protein is UPF0178 protein Tcr_1995.